We begin with the raw amino-acid sequence, 472 residues long: Argininosuccinate lyase (472 aa).

The protein belongs to the lyase 1 family. Argininosuccinate lyase subfamily.

It localises to the cytoplasm. The catalysed reaction is 2-(N(omega)-L-arginino)succinate = fumarate + L-arginine. The protein operates within amino-acid biosynthesis; L-arginine biosynthesis; L-arginine from L-ornithine and carbamoyl phosphate: step 3/3. This Mycolicibacterium paratuberculosis (strain ATCC BAA-968 / K-10) (Mycobacterium paratuberculosis) protein is Argininosuccinate lyase.